We begin with the raw amino-acid sequence, 368 residues long: Germination protease (368 aa).

A propeptide spanning residues 1 to 15 (MKEPLDLSKYSVRTD) is cleaved from the precursor.

Belongs to the peptidase A25 family. In terms of assembly, homotetramer. Post-translationally, autoproteolytically processed. The inactive tetrameric zymogen termed p46 autoprocesses to a smaller form termed p41, which is active only during spore germination.

The catalysed reaction is Endopeptidase action with P4 Glu or Asp, P1 preferably Glu &gt; Asp, P1' hydrophobic and P2' Ala.. Functionally, initiates the rapid degradation of small, acid-soluble proteins during spore germination. The sequence is that of Germination protease from Bacillus anthracis (strain A0248).